The sequence spans 996 residues: KK-1 biosynthesis cluster protein D (996 aa).

Disordered regions lie at residues 307 to 333, 425 to 449, 489 to 556, and 571 to 602; these read HDTD…PELD, EQDN…ARDL, AGVA…ALRA, and STHS…SLHS. Polar residues-rich tracts occupy residues 318-329 and 428-439; these read PIRSNKLSQSKQ and NQTNEEGTGEVQ. Composition is skewed to basic and acidic residues over residues 440-449 and 500-527; these read SQRDRRARDL and RAAE…DKAA. Positions 572-590 are enriched in polar residues; the sequence is THSIHQRASVNTTAPTVAR.

The protein operates within secondary metabolite biosynthesis. Its function is as follows. Part of the gene cluster that mediates the biosynthesis of KK-1, a novel cyclic depsipeptide with 10 residues which is a promising active compound with high activity against many plant pathogens, especially Botrytis cinerea. The role of kk1D in KK-1 biosynthesis has still to be determined. The nonribosomal peptide synthetase (NRPS) kk1B catalyzes the elongation and cyclization of the decapeptide chain composed of 1 D-lactic acid residue (D-Lac), 1 pipecolic acid residue (Pip), 1 aspartic acid residue (Asp), 1 isoleucine residue (Ile), 1 glycine residue (Gly), 1 tyrosine residue (Tyr) and 4 valine residues (Val). The Asp, Ile and 3 Val residues are N-methylated by the 5 methyltransferase domains from the NRPS (found in modules 3, 5, 6, 7 and 9), whereas the Tyr residue is O-methylated by the cluster encoded O-methyltransferase kk1A. The thioesterase kk1J is likely to be involved in the corrective mechanism of peptide chain synthesis. The D-lactate dehydrogenase kk1H is involved in the synthesis of D-lactic acid from pyruvic acid, which is recognized by the A domain of the first kk1B module. The pyrroline-5-carboxylate reductase kk1I is involved in the synthesis of the L-pipecolic acid residue of KK-1 from delta-1-pyrroline-5-carboxylate (P5C), a metabolic intermediate of lysine. It is still unclear how kk1C and kk1D are involved in the production of KK-1. The protein is KK-1 biosynthesis cluster protein D of Curvularia clavata.